The following is a 129-amino-acid chain: MASRLLRGVGALASQALRARGPNGVSVVRSMASGGGVPTDEEQATGLEREVMLAARKGQDPYNILAPKATSGTKEDPNLVPSITNKRIVGCICEEDNSTVIWFWLHKGEAQRCPSCGTHYKLVPHQLAH.

Residues 1-31 constitute a mitochondrion transit peptide; it reads MASRLLRGVGALASQALRARGPNGVSVVRSM. Residues Lys-68 and Lys-86 each carry the N6-acetyllysine modification. Cys-91, Cys-93, Cys-113, and Cys-116 together coordinate Zn(2+). Lys-121 carries the post-translational modification N6-acetyllysine.

It belongs to the cytochrome c oxidase subunit 5B family. Component of the cytochrome c oxidase (complex IV, CIV), a multisubunit enzyme composed of 14 subunits. The complex is composed of a catalytic core of 3 subunits MT-CO1, MT-CO2 and MT-CO3, encoded in the mitochondrial DNA, and 11 supernumerary subunits COX4I1 (or COX4I2), COX5A, COX5B, COX6A2 (or COX6A1), COX6B1 (or COX6B2), COX6C, COX7A1 (or COX7A2), COX7B, COX7C, COX8B and NDUFA4, which are encoded in the nuclear genome. The complex exists as a monomer or a dimer and forms supercomplexes (SCs) in the inner mitochondrial membrane with NADH-ubiquinone oxidoreductase (complex I, CI) and ubiquinol-cytochrome c oxidoreductase (cytochrome b-c1 complex, complex III, CIII), resulting in different assemblies (supercomplex SCI(1)III(2)IV(1) and megacomplex MCI(2)III(2)IV(2)).

The protein localises to the mitochondrion inner membrane. It participates in energy metabolism; oxidative phosphorylation. In terms of biological role, component of the cytochrome c oxidase, the last enzyme in the mitochondrial electron transport chain which drives oxidative phosphorylation. The respiratory chain contains 3 multisubunit complexes succinate dehydrogenase (complex II, CII), ubiquinol-cytochrome c oxidoreductase (cytochrome b-c1 complex, complex III, CIII) and cytochrome c oxidase (complex IV, CIV), that cooperate to transfer electrons derived from NADH and succinate to molecular oxygen, creating an electrochemical gradient over the inner membrane that drives transmembrane transport and the ATP synthase. Cytochrome c oxidase is the component of the respiratory chain that catalyzes the reduction of oxygen to water. Electrons originating from reduced cytochrome c in the intermembrane space (IMS) are transferred via the dinuclear copper A center (CU(A)) of subunit 2 and heme A of subunit 1 to the active site in subunit 1, a binuclear center (BNC) formed by heme A3 and copper B (CU(B)). The BNC reduces molecular oxygen to 2 water molecules using 4 electrons from cytochrome c in the IMS and 4 protons from the mitochondrial matrix. This is Cytochrome c oxidase subunit 5B, mitochondrial (COX5B) from Bos taurus (Bovine).